The sequence spans 388 residues: 3-amino-5-hydroxybenzoate synthase (388 aa).

K188 is modified (N6-(pyridoxal phosphate)lysine).

The protein belongs to the degT/dnrJ/eryC1 family. Homodimer. Can interact with RifL. It depends on pyridoxal 5'-phosphate as a cofactor.

It catalyses the reaction 5-deoxy-5-amino-3-dehydroshikimate = 3-amino-5-hydroxybenzoate + H2O + H(+). The catalysed reaction is UDP-3-oxo-alpha-D-glucose + L-glutamine = UDP-alpha-D-kanosamine + 2-oxoglutaramate. It participates in antibiotic biosynthesis; rifamycin B biosynthesis. AHBA synthase activity is activated by 3-deoxy-D-arabinoheptulosonic acid 7-phosphate (DAHP), an intermediate in the shikimate pathway, and is irreversibly inhibited by gabaculine (5-amino-1,3-cyclohexadiene-1-carboxylate). Its function is as follows. Catalyzes the dehydration and aromatization of 5-amino-5-deoxy-3-dehydroshikimate (aminoDHS) to 3-amino-5-hydroxybenzoate (AHBA), a compound that then serves as the starter unit for the assembly of a polyketide during the biosynthesis of rifamycin B and other ansamycin antibiotics. Cannot utilize 5-deoxy-5-amino-3-dehydroquinate (aminoDHQ), 5-deoxy-5-aminoshikimate (aminoSA), quinate, 3-dehydroquinate, or 3-dehydroshikimate (DHS) as substrate. In a complex with RifL, RifK may have a second function in the AHBA pathway, acting as a transaminase introducing the nitrogen into the first pathway intermediate, UDP-3-keto-D-glucose, to give UDP-kanosamine. Appears to use glutamine as the nitrogen donor; NH(4)(+) or asparagine are 30% less effective as nitrogen donors and neither glutamate nor aspartate show activity. This chain is 3-amino-5-hydroxybenzoate synthase (rifK), found in Amycolatopsis mediterranei (strain S699) (Nocardia mediterranei).